The primary structure comprises 806 residues: Leucine--tRNA ligase (806 aa).

Residues 54-64 (SYPSGDLHMGH) carry the 'HIGH' region motif. A 'KMSKS' region motif is present at residues 571–575 (KMSKS). An ATP-binding site is contributed by Lys574.

It belongs to the class-I aminoacyl-tRNA synthetase family.

The protein resides in the cytoplasm. It catalyses the reaction tRNA(Leu) + L-leucine + ATP = L-leucyl-tRNA(Leu) + AMP + diphosphate. The protein is Leucine--tRNA ligase of Tropheryma whipplei (strain Twist) (Whipple's bacillus).